Consider the following 960-residue polypeptide: Vacuolar membrane protease (960 aa).

The Cytoplasmic segment spans residues 1 to 57 (MADNNSSSGSLVIDEQDYDVHEAGQQGQQGQQKHQQRQQERPSLITRVFRSVFGYRK). A disordered region spans residues 22–41 (EAGQQGQQGQQKHQQRQQER). Low complexity predominate over residues 24–33 (GQQGQQGQQK). The helical transmembrane segment at 58-78 (TSLSLFVVATIALCVSLSYID) threads the bilayer. The Vacuolar portion of the chain corresponds to 79–401 (NSVDFISFPT…FTISTSQLFK (323 aa)). Asparagine 148 carries an N-linked (GlcNAc...) asparagine glycan. Positions 189 and 201 each coordinate Zn(2+). Glutamate 235 functions as the Proton acceptor in the catalytic mechanism. Zn(2+)-binding residues include glutamate 236, glutamate 261, and histidine 333. Residues 402–422 (INVALLTVFPILNGLLLLYTI) form a helical membrane-spanning segment. At 423–432 (RSRKWQVSFS) the chain is on the cytoplasmic side. The helical transmembrane segment at 433 to 453 (SAISIPVALLVTMFIVVYLVV) threads the bilayer. The Vacuolar segment spans residues 454 to 476 (ESYKSFNQYLPSSRPLLLVATIT). A helical transmembrane segment spans residues 477 to 497 (SILLLVFSIILVAFSFFSIIA). Residues 498 to 502 (EENLR) are Cytoplasmic-facing. A helical transmembrane segment spans residues 503–523 (LLAIVELSFAYWVGLAFTTHG). The Vacuolar segment spans residues 524–535 (LSGAESARHSGE). The helical transmembrane segment at 536–556 (FAVSILFTLEAVASFLGLIGW) threads the bilayer. Residues 557–635 (SLCRNRSHLQ…FGYDWSLQYL (79 aa)) lie on the Cytoplasmic side of the membrane. Basic and acidic residues predominate over residues 587–605 (NDHDHEHRHGHEDNEHGEA). The tract at residues 587–614 (NDHDHEHRHGHEDNEHGEAHVQQQSQSR) is disordered. Residues 636-656 (ITVPLSIFIIYNSGWLVLEGV) form a helical membrane-spanning segment. N-linked (GlcNAc...) asparagine glycosylation occurs at asparagine 657. The Vacuolar portion of the chain corresponds to 657–668 (NKTLQESAKAET). Residues 669 to 689 (FVYNLLWIVSVSLVLPLIPFA) traverse the membrane as a helical segment. Residues 690-696 (GKLNRYM) lie on the Cytoplasmic side of the membrane. Residues 697 to 717 (VFVLIAIGVLGTLLVHVVQPF) form a helical membrane-spanning segment. At 718 to 960 (NEANPLKLRF…LVAYTKQVHV (243 aa)) the chain is on the vacuolar side. Asparagine 736, asparagine 763, asparagine 803, asparagine 875, and asparagine 921 each carry an N-linked (GlcNAc...) asparagine glycan.

Belongs to the peptidase M28 family. The cofactor is Zn(2+).

The protein localises to the vacuole membrane. Functionally, may be involved in vacuolar sorting and osmoregulation. This chain is Vacuolar membrane protease, found in Lodderomyces elongisporus (strain ATCC 11503 / CBS 2605 / JCM 1781 / NBRC 1676 / NRRL YB-4239) (Yeast).